A 386-amino-acid polypeptide reads, in one-letter code: CUE domain-containing protein 1 (386 aa).

A compositionally biased stretch (low complexity) spans 1 to 10 (MTSLFRRSSS). Residues 1-40 (MTSLFRRSSSGSGGGGTAGARGGGGGTAAPQELNNSRPAR) form a disordered region. Gly residues predominate over residues 11–27 (GSGGGGTAGARGGGGGT). The CUE domain occupies 46–89 (EFNQAMDDFKTMFPNMDYDIIECVLRANSGAVDATIDQLLQMNL). 3 disordered regions span residues 147-172 (LAPP…RYRN), 195-225 (SIQG…DQES), and 367-386 (DFRG…REGQ). Residues 199–209 (NAGGPKPGSGE) show a composition bias toward gly residues.

The chain is CUE domain-containing protein 1 (CUEDC1) from Homo sapiens (Human).